We begin with the raw amino-acid sequence, 104 residues long: MANKIRRDDEVVVLAGKDKGKQGKVLRVLIADNRVIVEGVNLVKKHTKPNPQLGVAGGIVEKEASIHVSNVAIVNPATGKADRVGFRFEDEKKVRFFKSNGELV.

Belongs to the universal ribosomal protein uL24 family. Part of the 50S ribosomal subunit.

Functionally, one of two assembly initiator proteins, it binds directly to the 5'-end of the 23S rRNA, where it nucleates assembly of the 50S subunit. Its function is as follows. One of the proteins that surrounds the polypeptide exit tunnel on the outside of the subunit. The polypeptide is Large ribosomal subunit protein uL24 (Alteromonas mediterranea (strain DSM 17117 / CIP 110805 / LMG 28347 / Deep ecotype)).